Here is a 535-residue protein sequence, read N- to C-terminus: Sodium/hydrogen exchanger 9B2 (535 aa).

The span at methionine 1–glutamate 14 shows a compositional bias: basic and acidic residues. The segment at methionine 1–arginine 70 is disordered. At methionine 1 to arginine 85 the chain is on the cytoplasmic side. Composition is skewed to polar residues over residues serine 16–glycine 34 and threonine 46–methionine 58. A helical membrane pass occupies residues valine 86–valine 103. The Extracellular portion of the chain corresponds to threonine 104–glycine 112. A helical membrane pass occupies residues asparagine 113–glycine 132. At leucine 133 to proline 143 the chain is on the cytoplasmic side. Residues proline 144–valine 160 form a helical membrane-spanning segment. Residues isoleucine 161–lysine 170 are Extracellular-facing. A helical membrane pass occupies residues tryptophan 171–glycine 188. At leucine 189–leucine 199 the chain is on the cytoplasmic side. A helical membrane pass occupies residues lysine 200 to methionine 226. The Extracellular segment spans residues glycine 227–tryptophan 232. Residues glycine 233–glycine 241 traverse the membrane as a helical segment. Over alanine 242–leucine 269 the chain is Cytoplasmic. Valine 243, glycine 274, aspartate 277, and aspartate 278 together coordinate Na(+). Residues leucine 270 to leucine 289 traverse the membrane as a helical segment. The Extracellular segment spans residues glycine 290–valine 299. Residues phenylalanine 300 to isoleucine 323 form a helical membrane-spanning segment. Residues glutamine 324–arginine 338 lie on the Cytoplasmic side of the membrane. A helical transmembrane segment spans residues alanine 339–phenylalanine 356. The Extracellular portion of the chain corresponds to glycine 357 to glycine 360. The helical transmembrane segment at serine 361 to leucine 372 threads the bilayer. Residues alanine 373–alanine 389 lie on the Cytoplasmic side of the membrane. Residues valine 390 to threonine 410 form a helical membrane-spanning segment. The Extracellular portion of the chain corresponds to alanine 411 to threonine 416. The helical transmembrane segment at isoleucine 417–valine 439 threads the bilayer. Over cysteine 440–alanine 460 the chain is Cytoplasmic. The helical transmembrane segment at threonine 461–aspartate 472 threads the bilayer. The Extracellular segment spans residues threonine 473–tyrosine 485. The chain crosses the membrane as a helical span at residues glycine 486 to isoleucine 508. At glycine 509 to valine 535 the chain is on the cytoplasmic side.

This sequence belongs to the monovalent cation:proton antiporter 1 (CPA1) transporter (TC 2.A.36) family. As to quaternary structure, homodimer; dimerization is essential for SLC9B2 activity. Lipids seem to play a role in the stabilization of the dimerization subdomain.

It localises to the cell membrane. Its subcellular location is the mitochondrion membrane. The protein resides in the endosome membrane. It is found in the recycling endosome membrane. The protein localises to the lysosome membrane. It localises to the cytoplasmic vesicle. Its subcellular location is the secretory vesicle. The protein resides in the synaptic vesicle membrane. It is found in the cell projection. The protein localises to the cilium. It localises to the flagellum membrane. Its subcellular location is the basolateral cell membrane. The protein resides in the apical cell membrane. The catalysed reaction is Li(+)(out) + H(+)(in) = Li(+)(in) + H(+)(out). It catalyses the reaction Li(+)(in) + Na(+)(out) = Li(+)(out) + Na(+)(in). The enzyme catalyses Na(+)(in) + H(+)(out) = Na(+)(out) + H(+)(in). Its activity is regulated as follows. Allosterically inhibited by the N-terminal domain. Inhibited by phloretin. Its function is as follows. Electroneutral Na(+) Li(+)/H(+) antiporter that extrudes Na(+) or Li(+) in exchange for external protons across the membrane. Uses the proton gradient/membrane potential to extrude sodium. Contributes to the regulation of intracellular pH and sodium homeostasis. Also able to mediate Na(+)/Li(+) antiporter activity in kidney. May play a physiological role in renal tubular function and blood pressure homeostasis. Plays an important role for insulin secretion and clathrin-mediated endocytosis in beta-cells. Involved in sperm motility and fertility. It is controversial whether SLC9B2 plays a role in osteoclast differentiation or not. The chain is Sodium/hydrogen exchanger 9B2 (SLC9B2) from Bison bison bison (North American plains bison).